A 185-amino-acid chain; its full sequence is MVLSSQLSVGMFISTKDGLYKVVAVSKVTGNKGESFIKASLKAADSDVIVERNFKIGQEIKEAQFESRNLEYLYIEDENFLFLDLGNYEKIYISKEIMKDNFLFLKAGVTVSAMVYDDVVFSIELPHFLELMVSKTDFPGDSLLITGGTKKALLETGVEITVPPFVEIGDIIKIDTRTCEYIQRV.

Belongs to the elongation factor P family.

It is found in the cytoplasm. Its pathway is protein biosynthesis; polypeptide chain elongation. In terms of biological role, involved in peptide bond synthesis. Stimulates efficient translation and peptide-bond synthesis on native or reconstituted 70S ribosomes in vitro. Probably functions indirectly by altering the affinity of the ribosome for aminoacyl-tRNA, thus increasing their reactivity as acceptors for peptidyl transferase. This chain is Elongation factor P 1 (efp1), found in Chlamydia caviae (strain ATCC VR-813 / DSM 19441 / 03DC25 / GPIC) (Chlamydophila caviae).